The primary structure comprises 158 residues: GTP-dependent dephospho-CoA kinase (158 aa).

GTP is bound by residues aspartate 35, valine 36, aspartate 54, lysine 56, glutamate 109, and aspartate 132.

Belongs to the GTP-dependent DPCK family.

It catalyses the reaction 3'-dephospho-CoA + GTP = GDP + CoA + H(+). The protein operates within cofactor biosynthesis; coenzyme A biosynthesis. Catalyzes the GTP-dependent phosphorylation of the 3'-hydroxyl group of dephosphocoenzyme A to form coenzyme A (CoA). The protein is GTP-dependent dephospho-CoA kinase of Methanococcus maripaludis (strain C5 / ATCC BAA-1333).